The primary structure comprises 180 residues: Large ribosomal subunit protein uL5 (180 aa).

This sequence belongs to the universal ribosomal protein uL5 family. As to quaternary structure, part of the 50S ribosomal subunit; part of the 5S rRNA/L5/L18/L25 subcomplex. Contacts the 5S rRNA and the P site tRNA. Forms a bridge to the 30S subunit in the 70S ribosome.

In terms of biological role, this is one of the proteins that bind and probably mediate the attachment of the 5S RNA into the large ribosomal subunit, where it forms part of the central protuberance. In the 70S ribosome it contacts protein S13 of the 30S subunit (bridge B1b), connecting the 2 subunits; this bridge is implicated in subunit movement. Contacts the P site tRNA; the 5S rRNA and some of its associated proteins might help stabilize positioning of ribosome-bound tRNAs. This Streptococcus thermophilus (strain ATCC BAA-491 / LMD-9) protein is Large ribosomal subunit protein uL5.